We begin with the raw amino-acid sequence, 426 residues long: Serine--tRNA ligase (426 aa).

231–233 (TAE) provides a ligand contact to L-serine. 262 to 264 (RSE) contacts ATP. Glu285 contributes to the L-serine binding site. 349 to 352 (EISS) provides a ligand contact to ATP. Residue Ser385 participates in L-serine binding.

The protein belongs to the class-II aminoacyl-tRNA synthetase family. Type-1 seryl-tRNA synthetase subfamily. Homodimer. The tRNA molecule binds across the dimer.

It localises to the cytoplasm. The catalysed reaction is tRNA(Ser) + L-serine + ATP = L-seryl-tRNA(Ser) + AMP + diphosphate + H(+). The enzyme catalyses tRNA(Sec) + L-serine + ATP = L-seryl-tRNA(Sec) + AMP + diphosphate + H(+). The protein operates within aminoacyl-tRNA biosynthesis; selenocysteinyl-tRNA(Sec) biosynthesis; L-seryl-tRNA(Sec) from L-serine and tRNA(Sec): step 1/1. In terms of biological role, catalyzes the attachment of serine to tRNA(Ser). Is also able to aminoacylate tRNA(Sec) with serine, to form the misacylated tRNA L-seryl-tRNA(Sec), which will be further converted into selenocysteinyl-tRNA(Sec). In Brevibacillus brevis (strain 47 / JCM 6285 / NBRC 100599), this protein is Serine--tRNA ligase.